We begin with the raw amino-acid sequence, 110 residues long: Phosphoribosyl-ATP pyrophosphatase (110 aa).

The protein belongs to the PRA-PH family.

It localises to the cytoplasm. It catalyses the reaction 1-(5-phospho-beta-D-ribosyl)-ATP + H2O = 1-(5-phospho-beta-D-ribosyl)-5'-AMP + diphosphate + H(+). It participates in amino-acid biosynthesis; L-histidine biosynthesis; L-histidine from 5-phospho-alpha-D-ribose 1-diphosphate: step 2/9. This chain is Phosphoribosyl-ATP pyrophosphatase, found in Lacticaseibacillus casei (strain BL23) (Lactobacillus casei).